We begin with the raw amino-acid sequence, 77 residues long: Ubiquitin-like protein NEDD8 (77 aa).

The interaction with uba-3 stretch occupies residues 70 to 72; it reads VLA. A Glycyl lysine isopeptide (Gly-Lys) (interchain with K-? in acceptor proteins) cross-link involves residue G76. F77 is a propeptide.

Belongs to the ubiquitin family. As to quaternary structure, interacts with dcn-1. Covalently attached to cullins. May interact with atx-3. Cleavage of precursor form is necessary for function.

Its subcellular location is the nucleus. The protein resides in the cytoplasm. Functionally, ubiquitin-like protein which plays an important role in cell cycle control and embryogenesis. Covalent attachment to its substrates requires prior activation by the E1 complex uba-3-ula-1 and linkage to the E2 enzyme ubc-12. Attachment of ned-8 to cullins activates their associated E3 ubiquitin ligase activity, and thus promotes polyubiquitination and proteasomal degradation of cyclins and other regulatory proteins. In Caenorhabditis elegans, this protein is Ubiquitin-like protein NEDD8 (ned-8).